We begin with the raw amino-acid sequence, 111 residues long: Thioredoxin 2 (111 aa).

The 108-residue stretch at 2-109 folds into the Thioredoxin domain; that stretch reads SKGVITITDA…LLSFLDTHLN (108 aa). Cys-33 and Cys-36 are disulfide-bonded.

Belongs to the thioredoxin family.

Its function is as follows. Participates in various redox reactions through the reversible oxidation of its active center dithiol to a disulfide and catalyzes dithiol-disulfide exchange reactions. The protein is Thioredoxin 2 (trxB) of Nostoc sp. (strain PCC 7120 / SAG 25.82 / UTEX 2576).